The following is a 187-amino-acid chain: Large ribosomal subunit protein bL17 (187 aa).

The tract at residues 122–187 (PKVRSSRTST…EADAAEKSDK (66 aa)) is disordered. Residues 127 to 144 (SRTSTATAPVAAAPVAEA) are compositionally biased toward low complexity. Acidic residues predominate over residues 145-157 (PAEESDVPVEETD). The span at 167–176 (AETTDAAAAE) shows a compositional bias: low complexity.

Belongs to the bacterial ribosomal protein bL17 family. Part of the 50S ribosomal subunit. Contacts protein L32.

The sequence is that of Large ribosomal subunit protein bL17 from Clavibacter sepedonicus (Clavibacter michiganensis subsp. sepedonicus).